The following is a 376-amino-acid chain: Queuine tRNA-ribosyltransferase (376 aa).

Asp93 functions as the Proton acceptor in the catalytic mechanism. Substrate contacts are provided by residues 93–97 (DSGGF), Asp147, Gln190, and Gly217. The segment at 248–254 (GVGKPDD) is RNA binding. Asp267 functions as the Nucleophile in the catalytic mechanism. Zn(2+) is bound by residues Cys305, Cys307, Cys310, and His336.

The protein belongs to the queuine tRNA-ribosyltransferase family. Homodimer. Within each dimer, one monomer is responsible for RNA recognition and catalysis, while the other monomer binds to the replacement base PreQ1. Requires Zn(2+) as cofactor.

The enzyme catalyses 7-aminomethyl-7-carbaguanine + guanosine(34) in tRNA = 7-aminomethyl-7-carbaguanosine(34) in tRNA + guanine. The protein operates within tRNA modification; tRNA-queuosine biosynthesis. Its function is as follows. Catalyzes the base-exchange of a guanine (G) residue with the queuine precursor 7-aminomethyl-7-deazaguanine (PreQ1) at position 34 (anticodon wobble position) in tRNAs with GU(N) anticodons (tRNA-Asp, -Asn, -His and -Tyr). Catalysis occurs through a double-displacement mechanism. The nucleophile active site attacks the C1' of nucleotide 34 to detach the guanine base from the RNA, forming a covalent enzyme-RNA intermediate. The proton acceptor active site deprotonates the incoming PreQ1, allowing a nucleophilic attack on the C1' of the ribose to form the product. After dissociation, two additional enzymatic reactions on the tRNA convert PreQ1 to queuine (Q), resulting in the hypermodified nucleoside queuosine (7-(((4,5-cis-dihydroxy-2-cyclopenten-1-yl)amino)methyl)-7-deazaguanosine). In Jannaschia sp. (strain CCS1), this protein is Queuine tRNA-ribosyltransferase.